A 391-amino-acid chain; its full sequence is Succinate--CoA ligase [ADP-forming] subunit beta (391 aa).

The 238-residue stretch at 9-246 folds into the ATP-grasp domain; the sequence is KHLFTEAGIA…LTQEDETEVR (238 aa). Residues Lys46, 53–55, Glu99, Leu102, and Glu107 each bind ATP; that span reads GRG. The Mg(2+) site is built by Asn199 and Asp213. Substrate contacts are provided by residues Asn266 and 323–325; that span reads GIV.

This sequence belongs to the succinate/malate CoA ligase beta subunit family. As to quaternary structure, heterotetramer of two alpha and two beta subunits. The cofactor is Mg(2+).

It carries out the reaction succinate + ATP + CoA = succinyl-CoA + ADP + phosphate. The enzyme catalyses GTP + succinate + CoA = succinyl-CoA + GDP + phosphate. The protein operates within carbohydrate metabolism; tricarboxylic acid cycle; succinate from succinyl-CoA (ligase route): step 1/1. Its function is as follows. Succinyl-CoA synthetase functions in the citric acid cycle (TCA), coupling the hydrolysis of succinyl-CoA to the synthesis of either ATP or GTP and thus represents the only step of substrate-level phosphorylation in the TCA. The beta subunit provides nucleotide specificity of the enzyme and binds the substrate succinate, while the binding sites for coenzyme A and phosphate are found in the alpha subunit. This is Succinate--CoA ligase [ADP-forming] subunit beta from Halorhodospira halophila (strain DSM 244 / SL1) (Ectothiorhodospira halophila (strain DSM 244 / SL1)).